Reading from the N-terminus, the 480-residue chain is Amino acid permease 5 (480 aa).

Residues 1 to 25 are disordered; that stretch reads MVVQNVQDLDVLPKHSSDSFDDDGR. Residues 1–31 are Cytoplasmic-facing; it reads MVVQNVQDLDVLPKHSSDSFDDDGRPKRTGT. The segment covering 11-25 has biased composition (basic and acidic residues); it reads VLPKHSSDSFDDDGR. 2 consecutive transmembrane segments (helical) span residues 32–52 and 53–73; these read VWTASAHIITAVIGSGVLSLA and WAVAQIGWIGGPVAMLLFSFV. The Cytoplasmic segment spans residues 74-120; that stretch reads TFYTSTLLCSCYRSGDSVTGKRNYTYMDAIHSNLGGIKVKVCGVVQY. Residues 121-141 traverse the membrane as a helical segment; that stretch reads VNLFGTAIGYTIASAISLVAI. Over 142-157 the chain is Extracellular; sequence QRTSCQQMNGPNDPCH. Residues 158–178 traverse the membrane as a helical segment; that stretch reads VNGNVYMIAFGIVQIIFSQIP. The Cytoplasmic portion of the chain corresponds to 179–182; the sequence is DFDQ. A helical membrane pass occupies residues 183–203; sequence LWWLSIVAAVMSFAYSAIGLG. At 204-241 the chain is on the extracellular side; it reads LGVSKVVENKEIKGSLTGVTVGTVTLSGTVTSSQKIWR. The chain crosses the membrane as a helical span at residues 242-262; that stretch reads TFQSLGNIAFAYSYSMILIEI. Residues 263–280 are Cytoplasmic-facing; sequence QDTVKSPPAEVNTMRKAT. The chain crosses the membrane as a helical span at residues 281–301; that stretch reads FVSVAVTTVFYMLCGCVGYAA. The Extracellular portion of the chain corresponds to 302-328; that stretch reads FGDNAPGNLLAHGGFRNPYWLLDIANL. The helical transmembrane segment at 329 to 349 threads the bilayer; it reads AIVIHLVGAYQVYCQPLFAFV. Topologically, residues 350-383 are cytoplasmic; it reads EKEASRRFPESEFVTKEIKIQLFPGKPFNLNLFR. Residues 384–404 traverse the membrane as a helical segment; it reads LVWRTFFVMTTTLISMLMPFF. Topologically, residues 405 to 406 are extracellular; the sequence is ND. A helical membrane pass occupies residues 407-427; sequence VVGLLGAIGFWPLTVYFPVEM. Over 428–445 the chain is Cytoplasmic; it reads YIAQKNVPRWGTKWVCLQ. A helical membrane pass occupies residues 446 to 466; that stretch reads VLSVTCLFVSVAAAAGSVIGI. The Extracellular segment spans residues 467–480; the sequence is VSDLKVYKPFQSEF.

It belongs to the amino acid/polyamine transporter 2 family. Amino acid/auxin permease (AAAP) (TC 2.A.18.2) subfamily. In terms of tissue distribution, expressed in leaves, stems, roots, siliques and flowers.

The protein resides in the cell membrane. Inhibited by 2,4-dinitrophenol. In terms of biological role, amino acid-proton symporter. Stereospecific transporter with a broad specificity for glutamate and both neutral and basic amino acids. Reduced affinities for asparagine and valine. High affinity transport of the cationic amino acids arginine and lysine, but not of histidine. The polypeptide is Amino acid permease 5 (AAP5) (Arabidopsis thaliana (Mouse-ear cress)).